Reading from the N-terminus, the 342-residue chain is Periplasmic protein TorT (342 aa).

Residues 1–18 (MRVLLFLLLSLFMLPAFS) form the signal peptide.

Belongs to the bacterial solute-binding protein 2 family.

The protein resides in the periplasm. Upon binding a putative inducer it probably interacts with TorS and allows it to play a role in the induction of the torCAD operon for trimethylamine N-oxide reductase. This chain is Periplasmic protein TorT (torT), found in Escherichia coli (strain K12).